Here is a 440-residue protein sequence, read N- to C-terminus: Glycerophosphocholine cholinephosphodiesterase ENPP6 (440 aa).

The N-terminal stretch at Met1–Ala22 is a signal peptide. The substrate site is built by Asp32, Ser71, and Asn92. 2 residues coordinate Zn(2+): Asp32 and Ser71. Catalysis depends on Ser71, which acts as the Nucleophile. Ser71 carries the post-translational modification Phosphoserine. 2 N-linked (GlcNAc...) asparagine glycosylation sites follow: Asn100 and Asn118. Cys142 and Cys154 are joined by a disulfide. Substrate is bound at residue Asp193. Residues Asp193, His197, Asp240, and His241 each coordinate Zn(2+). His241 lines the substrate pocket. Asn341 carries an N-linked (GlcNAc...) asparagine glycan. Residue His354 coordinates substrate. Zn(2+) is bound at residue His354. Asn404 carries an N-linked (GlcNAc...) asparagine glycan. Residue Ser419 is the site of GPI-anchor amidated serine attachment. Positions Ser420 to Val440 are cleaved as a propeptide — removed in mature form.

It belongs to the nucleotide pyrophosphatase/phosphodiesterase family. In terms of assembly, homodimer; disulfide-linked. Homotetramer. The cofactor is Zn(2+).

It is found in the cell membrane. It carries out the reaction sn-glycerol 3-phosphocholine + H2O = phosphocholine + glycerol + H(+). It catalyses the reaction a 1-acyl-sn-glycero-3-phosphocholine + H2O = a 1-acyl-sn-glycerol + phosphocholine + H(+). The enzyme catalyses a 1-O-alkyl-sn-glycero-3-phosphocholine + H2O = a 1-O-alkyl-sn-glycerol + phosphocholine + H(+). The catalysed reaction is 1-dodecanoyl-sn-glycero-3-phosphocholine + H2O = 1-dodecanoyl-sn-glycerol + phosphocholine + H(+). It carries out the reaction 1-hexadecanoyl-sn-glycero-3-phosphocholine + H2O = 1-hexadecanoyl-sn-glycerol + phosphocholine + H(+). It catalyses the reaction 1-(5Z,8Z,11Z,14Z-eicosatetraenoyl)-sn-glycero-3-phosphocholine + H2O = 1-(5Z,8Z,11Z,14Z-eicosatetraenoyl)-sn-glycerol + phosphocholine + H(+). The enzyme catalyses 1-tetradecanoyl-sn-glycero-3-phosphocholine + H2O = 1-tetradecanoyl-sn-glycerol + phosphocholine + H(+). The catalysed reaction is sphing-4-enine-phosphocholine + H2O = sphing-4-enine + phosphocholine + H(+). It carries out the reaction 1-(9Z-octadecenoyl)-sn-glycero-3-phosphocholine + H2O = 1-(9Z-octadecenoyl)-sn-glycerol + phosphocholine + H(+). It catalyses the reaction 1-(9Z,12Z)-octadecadienoyl-sn-glycero-3-phosphocholine + H2O = 1-(9Z,12Z-octadecadienoyl)-sn-glycerol + phosphocholine + H(+). The enzyme catalyses glycero-2-phosphocholine + H2O = phosphocholine + glycerol + H(+). Its activity is regulated as follows. Inhibited by EDTA and EGTA in vitro. Choline-specific glycerophosphodiesterase that hydrolyzes glycerophosphocholine (GPC) and lysophosphatidylcholine (LPC) and contributes to supplying choline to the cells. Has a preference for LPC with short (12:0 and 14:0) or polyunsaturated (18:2 and 20:4) fatty acids. In vitro, hydrolyzes only choline-containing lysophospholipids, such as sphingosylphosphorylcholine (SPC), platelet-activating factor (PAF) and lysoPAF, but not other lysophospholipids. The polypeptide is Glycerophosphocholine cholinephosphodiesterase ENPP6 (Rattus norvegicus (Rat)).